Here is a 774-residue protein sequence, read N- to C-terminus: Cilium assembly protein DZIP1L (774 aa).

A C2H2-type zinc finger spans residues 166–189; that stretch reads HTCHLCDKTFMNATFLRGHIQRRH. Residues 204–450 adopt a coiled-coil conformation; that stretch reads LGEVLEELRA…RKVLAALRKN (247 aa). Disordered regions lie at residues 415 to 435, 515 to 674, and 686 to 774; these read MPKA…ASLE, NKEV…ASSG, and KQLE…IPGW. The segment covering 421–433 has biased composition (acidic residues); it reads TEEDSSEEELEAS. Phosphoserine is present on residues Ser425 and Ser426. Residues 515-526 show a composition bias toward basic and acidic residues; sequence NKEVSSRVKQRW. The span at 597 to 616 shows a compositional bias: low complexity; sequence GPSSTPVSPGSGLSSTPPFS.

This sequence belongs to the DZIP C2H2-type zinc-finger protein family. Interacts with SEPTIN2.

It is found in the cytoplasm. The protein resides in the cytoskeleton. The protein localises to the cilium basal body. Its subcellular location is the microtubule organizing center. It localises to the centrosome. It is found in the centriole. Involved in primary cilium formation. Probably acts as a transition zone protein required for localization of PKD1/PC1 and PKD2/PC2 to the ciliary membrane. The chain is Cilium assembly protein DZIP1L from Mus musculus (Mouse).